The primary structure comprises 116 residues: Somatostatin (116 aa).

Positions Met1 to Gly24 are cleaved as a signal peptide. Positions Ala25 to Arg88 are excised as a propeptide. Position 43 is an alanine amide (Ala43). The interval Gln62–Arg99 is disordered. Cys105 and Cys116 are joined by a disulfide.

This sequence belongs to the somatostatin family. Post-translationally, C-terminal amidation of the neuronostatin peptide is required for its biological activity, including for the regulation of mean arterial pressure. In terms of tissue distribution, expressed in the pancreas and the spleen (at protein level).

It localises to the secreted. Inhibits the secretion of pituitary hormones, including that of growth hormone/somatotropin (GH1), PRL, ACTH, luteinizing hormone (LH) and TSH. Also impairs ghrelin- and GnRH-stimulated secretion of GH1 and LH; the inhibition of ghrelin-stimulated secretion of GH1 can be further increased by neuronostatin. Its function is as follows. May enhance low-glucose-induced glucagon release by pancreatic alpha cells. This effect may be mediated by binding to GPR107 and PKA activation. May regulate cardiac contractile function. May compromise cardiomyocyte viability. In the central nervous system, may impair memory retention and may affect hippocampal excitability. May also have anxiolytic and anorexigenic effects. May play a role in arterial pressure regulation. May inhibit basal, but not ghrelin- or GnRH-stimulated secretion of GH1 or LH, but does not affect the release of other pituitary hormones, including PRL, ACTH, FSH or TSH. Potentiates inhibitory action of somatostatin on ghrelin-stimulated secretion of GH1, but not that on GnRH-stimulated secretion of LH. In Sus scrofa (Pig), this protein is Somatostatin (SST).